Here is a 348-residue protein sequence, read N- to C-terminus: Putative transport protein HP_0567 (348 aa).

Helical transmembrane passes span 6-26 (FFWI…QDFL), 27-47 (MDAL…VFLD), 56-76 (SFLC…FIVY), 143-163 (LKLI…FYYG), 194-214 (IVLL…GVMI), 224-244 (LGIL…LIWI), 266-286 (SILL…IVFI), and 300-320 (MLIF…GIIV).

The protein belongs to the autoinducer-2 exporter (AI-2E) (TC 2.A.86) family.

The protein resides in the cell membrane. The protein is Putative transport protein HP_0567 of Helicobacter pylori (strain ATCC 700392 / 26695) (Campylobacter pylori).